Reading from the N-terminus, the 124-residue chain is Large ribosomal subunit protein bL12 (124 aa).

The protein belongs to the bacterial ribosomal protein bL12 family. Homodimer. Part of the ribosomal stalk of the 50S ribosomal subunit. Forms a multimeric L10(L12)X complex, where L10 forms an elongated spine to which 2 to 4 L12 dimers bind in a sequential fashion. Binds GTP-bound translation factors.

Functionally, forms part of the ribosomal stalk which helps the ribosome interact with GTP-bound translation factors. Is thus essential for accurate translation. This is Large ribosomal subunit protein bL12 from Rickettsia akari (strain Hartford).